The chain runs to 74 residues: uncharacterized protein (74 aa).

Composition is skewed to basic and acidic residues over residues 1 to 13 (MKKQKSIDKHQLK) and 20 to 60 (IKAK…KSFE). The segment at 1–74 (MKKQKSIDKH…ESQMDWHQYK (74 aa)) is disordered. Positions 64–74 (NESQMDWHQYK) are enriched in polar residues.

This is an uncharacterized protein from Bacillus subtilis (strain 168).